The chain runs to 295 residues: Protein SSO2 (295 aa).

Residues 1 to 269 are Cytoplasmic-facing; the sequence is MSNANPYENN…ARKARKNKIR (269 aa). Phosphoserine is present on residues serine 31 and serine 34. Positions 39-100 form a coiled coil; the sequence is AFMNKINSIN…ATDLQYQLKA (62 aa). Residues 194–256 form the t-SNARE coiled-coil homology domain; sequence LAEVQARHQE…EQGVGHTNKA (63 aa). A helical; Anchor for type IV membrane protein transmembrane segment spans residues 270–291; the sequence is CLIICFIIFAIVVVVVVVPSVV. The Extracellular portion of the chain corresponds to 292-295; it reads ETRK.

It belongs to the syntaxin family.

It is found in the membrane. Functionally, required for vesicle fusion with the plasma membrane. The polypeptide is Protein SSO2 (SSO2) (Saccharomyces cerevisiae (strain ATCC 204508 / S288c) (Baker's yeast)).